The chain runs to 248 residues: Regulator of G-protein signaling 7-binding protein A (248 aa).

The segment at 1 to 32 (MSSAPNGRKNRPRTAGTIFQIGGKAPSRESER) is disordered. S-palmitoyl cysteine attachment occurs at residues C243 and C244.

It belongs to the RGS7BP/RGS9BP family. In terms of processing, palmitoylated. Undergoes rapid palmitoylation turnover. Palmitoylation regulates the cell membrane and nuclear shuttling and the regulation of GPCR signaling. Upon depalmitoylation, it is targeted from the plasma membrane into the nucleus. GPCR signaling inhibits depalmitoylation and promotes localization to the plasma membrane.

It localises to the nucleus. The protein localises to the cytoplasm. The protein resides in the cell membrane. Regulator of G protein-coupled receptor (GPCR) signaling. Regulatory subunit of the R7-Gbeta5 complexes that acts by controlling the subcellular location of the R7-Gbeta5 complexes. When palmitoylated, it targets the R7-Gbeta5 complexes to the plasma membrane, leading to inhibit G protein alpha subunits. When it is unpalmitoylated, the R7-Gbeta5 complexes undergo a nuclear/cytoplasmic shuttling. This is Regulator of G-protein signaling 7-binding protein A (rgs7bpa) from Danio rerio (Zebrafish).